The following is a 65-amino-acid chain: Large ribosomal subunit protein bL35 (65 aa).

It belongs to the bacterial ribosomal protein bL35 family.

In Wolbachia sp. subsp. Brugia malayi (strain TRS), this protein is Large ribosomal subunit protein bL35.